The following is a 411-amino-acid chain: Acetylornithine aminotransferase (411 aa).

Pyridoxal 5'-phosphate-binding positions include 107 to 108 and F141; that span reads GT. R144 lines the N(2)-acetyl-L-ornithine pocket. Residue 227–230 participates in pyridoxal 5'-phosphate binding; the sequence is DEIQ. K256 carries the N6-(pyridoxal phosphate)lysine modification. N(2)-acetyl-L-ornithine is bound at residue T284. T285 contacts pyridoxal 5'-phosphate.

The protein belongs to the class-III pyridoxal-phosphate-dependent aminotransferase family. ArgD subfamily. As to quaternary structure, homodimer. Pyridoxal 5'-phosphate is required as a cofactor.

The protein localises to the cytoplasm. It catalyses the reaction N(2)-acetyl-L-ornithine + 2-oxoglutarate = N-acetyl-L-glutamate 5-semialdehyde + L-glutamate. It participates in amino-acid biosynthesis; L-arginine biosynthesis; N(2)-acetyl-L-ornithine from L-glutamate: step 4/4. This chain is Acetylornithine aminotransferase, found in Xylella fastidiosa (strain 9a5c).